The sequence spans 193 residues: Molybdenum cofactor guanylyltransferase (193 aa).

Residues 8–10 (LAG), Lys-21, Asp-67, and Asp-98 each bind GTP. Residue Asp-98 participates in Mg(2+) binding.

Belongs to the MobA family. Monomer. The cofactor is Mg(2+).

The protein resides in the cytoplasm. It catalyses the reaction Mo-molybdopterin + GTP + H(+) = Mo-molybdopterin guanine dinucleotide + diphosphate. Functionally, transfers a GMP moiety from GTP to Mo-molybdopterin (Mo-MPT) cofactor (Moco or molybdenum cofactor) to form Mo-molybdopterin guanine dinucleotide (Mo-MGD) cofactor. The polypeptide is Molybdenum cofactor guanylyltransferase (Cereibacter sphaeroides (Rhodobacter sphaeroides)).